The following is a 318-amino-acid chain: tRNA dimethylallyltransferase (318 aa).

16–23 (GPTASGKS) is an ATP binding site. A substrate-binding site is contributed by 18-23 (TASGKS). Interaction with substrate tRNA stretches follow at residues 41–44 (DSRQ) and 165–169 (QRLIR).

Belongs to the IPP transferase family. As to quaternary structure, monomer. The cofactor is Mg(2+).

The enzyme catalyses adenosine(37) in tRNA + dimethylallyl diphosphate = N(6)-dimethylallyladenosine(37) in tRNA + diphosphate. In terms of biological role, catalyzes the transfer of a dimethylallyl group onto the adenine at position 37 in tRNAs that read codons beginning with uridine, leading to the formation of N6-(dimethylallyl)adenosine (i(6)A). In Pelodictyon phaeoclathratiforme (strain DSM 5477 / BU-1), this protein is tRNA dimethylallyltransferase.